A 509-amino-acid chain; its full sequence is Maturase K (509 aa).

Belongs to the intron maturase 2 family. MatK subfamily.

The protein localises to the plastid. The protein resides in the chloroplast. Its function is as follows. Usually encoded in the trnK tRNA gene intron. Probably assists in splicing its own and other chloroplast group II introns. The polypeptide is Maturase K (Thujopsis dolabrata (Hiba arborvitae)).